A 227-amino-acid polypeptide reads, in one-letter code: MNSVEFPLLDRRTKNSVISTTSNDLSNWSRLSSLWPLLYGTSCCFIEFASLIGSRFDFDRYGLVPRSSPRQADLVLTAGTVTMKMAPSLVRLYEQMPEPKYVIAMGACTITGGMFSTDSYSTVRGVDKLIPVDVYLPGCPPKPEAVIDAITKLRKKISREIYEDRVRSQRVNRYFTTNHKFLIGRSIHIGNSDKGFLYQPPATSKLPAEKFFKYKSSAPSPSHELVN.

4 residues coordinate [4Fe-4S] cluster: Cys43, Cys44, Cys108, and Cys139.

This sequence belongs to the complex I 20 kDa subunit family. In terms of assembly, NDH is composed of at least 16 different subunits, 5 of which are encoded in the nucleus. Requires [4Fe-4S] cluster as cofactor.

It localises to the plastid. The protein resides in the chloroplast thylakoid membrane. The catalysed reaction is a plastoquinone + NADH + (n+1) H(+)(in) = a plastoquinol + NAD(+) + n H(+)(out). It catalyses the reaction a plastoquinone + NADPH + (n+1) H(+)(in) = a plastoquinol + NADP(+) + n H(+)(out). Functionally, NDH shuttles electrons from NAD(P)H:plastoquinone, via FMN and iron-sulfur (Fe-S) centers, to quinones in the photosynthetic chain and possibly in a chloroplast respiratory chain. The immediate electron acceptor for the enzyme in this species is believed to be plastoquinone. Couples the redox reaction to proton translocation, and thus conserves the redox energy in a proton gradient. The chain is NAD(P)H-quinone oxidoreductase subunit K, chloroplastic from Pelargonium hortorum (Common geranium).